The primary structure comprises 419 residues: BTB/POZ domain-containing protein KCTD20 (419 aa).

The 75-residue stretch at 117–191 (EKVTLLVDGT…YKTGIINCPD (75 aa)) folds into the BTB domain.

In terms of assembly, interacts with AKT1; AKT2 and AKT3. Associates with PP2CA. Part of a complex containing MARK4.

The protein localises to the cytoplasm. Promotes the phosphorylation of AKT family members. This is BTB/POZ domain-containing protein KCTD20 (KCTD20) from Homo sapiens (Human).